We begin with the raw amino-acid sequence, 204 residues long: uncharacterized protein (204 aa).

The signal sequence occupies residues 1–21; the sequence is MIKKFLLFAMLNIFLTNKAHS.

This is an uncharacterized protein from Borreliella burgdorferi (strain ATCC 35210 / DSM 4680 / CIP 102532 / B31) (Borrelia burgdorferi).